Reading from the N-terminus, the 344-residue chain is rRNA 2'-O-methyltransferase fibrillarin (344 aa).

The disordered stretch occupies residues M1–I113. A compositionally biased stretch (gly residues) spans P8 to G107. An asymmetric dimethylarginine mark is found at R9, R23, R25, R40, R42, R48, R51, R58, R63, R71, R77, R83, R88, R93, and R98. Residues T197–T198, E216–F217, D241–A242, and D261–Q264 each bind S-adenosyl-L-methionine.

Belongs to the methyltransferase superfamily. Fibrillarin family. As to quaternary structure, component of box C/D small nucleolar ribonucleoprotein (snoRNP) particles. It is associated with the U3, U8 and U13 small nuclear RNAs. In terms of processing, by homology to other fibrillarins, some or all of the N-terminal domain arginines are modified to asymmetric dimethylarginine (DMA).

It is found in the nucleus. The protein localises to the nucleolus. It catalyses the reaction L-glutaminyl-[histone H2A] + S-adenosyl-L-methionine = N(5)-methyl-L-glutaminyl-[histone H2A] + S-adenosyl-L-homocysteine + H(+). In terms of biological role, S-adenosyl-L-methionine-dependent methyltransferase that has the ability to methylate both RNAs and proteins. Involved in pre-rRNA processing. Utilizes the methyl donor S-adenosyl-L-methionine to catalyze the site-specific 2'-hydroxyl methylation of ribose moieties in pre-ribosomal RNA. Site specificity is provided by a guide RNA that base pairs with the substrate. Methylation occurs at a characteristic distance from the sequence involved in base pairing with the guide RNA. Also acts as a protein methyltransferase by mediating methylation of 'Gln-105' of histone H2A (H2AQ105me), a modification that impairs binding of the FACT complex and is specifically present at 35S ribosomal DNA locus. This chain is rRNA 2'-O-methyltransferase fibrillarin, found in Drosophila melanogaster (Fruit fly).